The sequence spans 409 residues: Major capsid protein (409 aa).

The protein belongs to the lambda phage major capsid protein family. In terms of assembly, homomultimer. Interacts with the portal protein. Interacts with the decoration protein.

The protein localises to the virion. It localises to the host cytoplasm. In terms of biological role, assembles to form an icosahedric capsid shell with a T=7 symmetry although with a diameter of about 82 nm, which is a larger volume than the usual T=7 capsids. A dramatic reconfiguration of the capsid shell that expands the procaspid from a diameter of 66 nm to a supersized capsid of 82 nm, allows packaging of the large viral DNA genome. The capsid decoration protein binds the expanded capsid and stabilizes it. This is Major capsid protein from Thermus virus P23-45 (Thermus thermophilus phage P23-45).